Reading from the N-terminus, the 182-residue chain is ATP synthase subunit b, chloroplastic (182 aa).

A helical membrane pass occupies residues 33 to 51; the sequence is VLNIAILLSGVIYLGRNFL.

It belongs to the ATPase B chain family. In terms of assembly, F-type ATPases have 2 components, F(1) - the catalytic core - and F(0) - the membrane proton channel. F(1) has five subunits: alpha(3), beta(3), gamma(1), delta(1), epsilon(1). F(0) has four main subunits: a(1), b(1), b'(1) and c(10-14). The alpha and beta chains form an alternating ring which encloses part of the gamma chain. F(1) is attached to F(0) by a central stalk formed by the gamma and epsilon chains, while a peripheral stalk is formed by the delta, b and b' chains.

It is found in the plastid. The protein localises to the chloroplast thylakoid membrane. In terms of biological role, f(1)F(0) ATP synthase produces ATP from ADP in the presence of a proton or sodium gradient. F-type ATPases consist of two structural domains, F(1) containing the extramembraneous catalytic core and F(0) containing the membrane proton channel, linked together by a central stalk and a peripheral stalk. During catalysis, ATP synthesis in the catalytic domain of F(1) is coupled via a rotary mechanism of the central stalk subunits to proton translocation. Component of the F(0) channel, it forms part of the peripheral stalk, linking F(1) to F(0). This is ATP synthase subunit b, chloroplastic from Guillardia theta (Cryptophyte).